A 1486-amino-acid polypeptide reads, in one-letter code: Chromosome partition protein MukB (1486 aa).

Residue 34–41 participates in ATP binding; it reads GGNGAGKS. Coiled-coil stretches lie at residues 326–418, 444–480, and 509–603; these read LEAD…QYNQ, LETF…QAYQ, and RHLA…RAPV. Residues 666-783 form a flexible hinge region; sequence PGGSEDQRLN…EVPLFGRAAR (118 aa). Coiled-coil stretches lie at residues 835–923, 977–1115, and 1209–1266; these read EAEI…AKLE, EMLS…TAKA, and VEAI…QNVS.

This sequence belongs to the SMC family. MukB subfamily. Homodimerization via its hinge domain. Binds to DNA via its C-terminal region. Interacts, and probably forms a ternary complex, with MukE and MukF via its C-terminal region. The complex formation is stimulated by calcium or magnesium. Interacts with tubulin-related protein FtsZ.

The protein localises to the cytoplasm. The protein resides in the nucleoid. Plays a central role in chromosome condensation, segregation and cell cycle progression. Functions as a homodimer, which is essential for chromosome partition. Involved in negative DNA supercoiling in vivo, and by this means organize and compact chromosomes. May achieve or facilitate chromosome segregation by condensation DNA from both sides of a centrally located replisome during cell division. The chain is Chromosome partition protein MukB from Shigella flexneri serotype 5b (strain 8401).